Reading from the N-terminus, the 324-residue chain is Acetyl-coenzyme A carboxylase carboxyl transferase subunit alpha (324 aa).

Residues 44–298 (QLEAKATQLR…KTAIVKSLDD (255 aa)) enclose the CoA carboxyltransferase C-terminal domain.

Belongs to the AccA family. Acetyl-CoA carboxylase is a heterohexamer composed of biotin carboxyl carrier protein (AccB), biotin carboxylase (AccC) and two subunits each of ACCase subunit alpha (AccA) and ACCase subunit beta (AccD).

The protein localises to the cytoplasm. The enzyme catalyses N(6)-carboxybiotinyl-L-lysyl-[protein] + acetyl-CoA = N(6)-biotinyl-L-lysyl-[protein] + malonyl-CoA. It participates in lipid metabolism; malonyl-CoA biosynthesis; malonyl-CoA from acetyl-CoA: step 1/1. In terms of biological role, component of the acetyl coenzyme A carboxylase (ACC) complex. First, biotin carboxylase catalyzes the carboxylation of biotin on its carrier protein (BCCP) and then the CO(2) group is transferred by the carboxyltransferase to acetyl-CoA to form malonyl-CoA. This chain is Acetyl-coenzyme A carboxylase carboxyl transferase subunit alpha, found in Trichodesmium erythraeum (strain IMS101).